The following is a 100-amino-acid chain: Testis development-related protein 1 (100 aa).

Positions Gly73–Leu100 are disordered.

Expressed in the testis but not in any other non-reproductive tissues (at protein level). Mainly located in spermatogenic cells in seminiferous tubules of adult testis.

The protein localises to the cytoplasm. This chain is Testis development-related protein 1 (TDRG1), found in Homo sapiens (Human).